We begin with the raw amino-acid sequence, 384 residues long: F-box A protein 224 (384 aa).

Residues 71–122 (PKSLSDFPIGVMYDVLGHVDPFERLVLRKVSRNLRDVVQKMRCELDALYVNK) enclose the F-box domain.

Belongs to the FTH family.

The chain is F-box A protein 224 (fbxa-224) from Caenorhabditis elegans.